We begin with the raw amino-acid sequence, 317 residues long: R-phycoerythrin gamma chain, chloroplastic (317 aa).

A chloroplast-targeting transit peptide spans 1–40 (MASPAFAVNGMFTPVKLSGSFTASMPVDSKPAASATGVRM). Residues cysteine 94 and cysteine 133 each contribute to the phycourobilin site. Position 210 (cysteine 210) interacts with (2R,3E)-phycoerythrobilin. Residue cysteine 297 participates in phycourobilin binding.

As to quaternary structure, heteromer of 1 alpha, 1 beta and 2 gamma chains. Contains four covalently linked bilin chromophores.

It is found in the plastid. The protein resides in the chloroplast thylakoid membrane. Functionally, critical for the incorporation of phycoerythrin in the phycobilisome complex. This Aglaothamnion neglectum (Red alga) protein is R-phycoerythrin gamma chain, chloroplastic.